The sequence spans 425 residues: Monoacylglycerol lipase ABHD2 (425 aa).

The Cytoplasmic portion of the chain corresponds to 1–9 (MNAMLETPE). A helical; Signal-anchor for type II membrane protein transmembrane segment spans residues 10 to 30 (LPAVFDGVKLAAVAAVLYVIV). The Extracellular segment spans residues 31–425 (RCLNLKSPTA…DTEQVEADLE (395 aa)). The 255-residue stretch at 128–382 (MVICPGIANH…HGGHLGFFEG (255 aa)) folds into the AB hydrolase-1 domain. N136 is a glycosylation site (N-linked (GlcNAc...) asparagine). The Nucleophile role is filled by S207. Residues D345 and H376 each act as charge relay system in the active site.

Belongs to the AB hydrolase superfamily. AB hydrolase 4 family. Present in sperm (at protein level).

Its subcellular location is the cell projection. The protein localises to the cilium. The protein resides in the flagellum membrane. It is found in the cell membrane. The catalysed reaction is an acetyl ester + H2O = an aliphatic alcohol + acetate + H(+). It catalyses the reaction Hydrolyzes glycerol monoesters of long-chain fatty acids.. It carries out the reaction a triacylglycerol + H2O = a diacylglycerol + a fatty acid + H(+). The enzyme catalyses 2-(5Z,8Z,11Z,14Z-eicosatetraenoyl)-glycerol + H2O = glycerol + (5Z,8Z,11Z,14Z)-eicosatetraenoate + H(+). The catalysed reaction is a butanoate ester + H2O = an aliphatic alcohol + butanoate + H(+). It catalyses the reaction hexadecanoate ester + H2O = an aliphatic alcohol + hexadecanoate + H(+). Its activity is regulated as follows. Acylglycerol lipase activity is activated upon binding to progesterone. Progesterone-dependent acylglycerol lipase that catalyzes hydrolysis of endocannabinoid arachidonoylglycerol (AG) from cell membrane. Acts as a progesterone receptor: progesterone-binding activates the acylglycerol lipase activity, mediating degradation of 1-arachidonoylglycerol (1AG) and 2-arachidonoylglycerol (2AG) to glycerol and arachidonic acid (AA). Also displays an ester hydrolase activity against acetyl ester, butanoate ester and hexadecanoate ester. Plays a key role in sperm capacitation in response to progesterone by mediating degradation of 2AG, an inhibitor of the sperm calcium channel CatSper, leading to calcium influx via CatSper and sperm activation. May also play a role in smooth muscle cells migration. This chain is Monoacylglycerol lipase ABHD2, found in Homo sapiens (Human).